The sequence spans 1277 residues: NPC intracellular cholesterol transporter 1 (1277 aa).

Positions 1-22 (MGAHHPALGLLLLLLCPAQVFS) are cleaved as a signal peptide. Residues 23–269 (QSCVWYGECG…WRIWGLDAMY (247 aa)) are Lumenal-facing. Cystine bridges form between Cys25/Cys74, Cys31/Cys42, Cys63/Cys109, Cys75/Cys113, Cys97/Cys238, Cys100/Cys160, Cys177/Cys184, Cys227/Cys243, and Cys240/Cys247. Asn41 is a binding site for cholesterol. Asn70 is a glycosylation site (N-linked (GlcNAc...) asparagine). Gln79 is a cholesterol binding site. 2 N-linked (GlcNAc...) asparagine glycosylation sites follow: Asn122 and Asn137. The interval 175–205 (LLCGRDARACNATNWIEYMFNKDNGQAPFTI) is important for cholesterol binding and cholesterol transfer from NPC1 to liposomes. N-linked (GlcNAc...) asparagine glycosylation is found at Asn185, Asn222, and Asn228. The helical transmembrane segment at 270 to 290 (VIMWVTYVAFLFVFFGALLAV) threads the bilayer. At 291-350 (WCHRRRYFVSEYTPIDSNIAFSVNSSDKGEASCCDPLGAAFDDCLRRMFTKWGAFCVRNP) the chain is on the cytoplasmic side. A helical transmembrane segment spans residues 351-371 (TCIIFFSLAFITVCSSGLVFV). Residues 372–621 (QVTTNPVELW…ELNRESNSDV (250 aa)) lie on the Lumenal side of the membrane. 4 N-linked (GlcNAc...) asparagine glycosylation sites follow: Asn414, Asn459, Asn478, and Asn524. Disulfide bonds link Cys468-Cys479 and Cys516-Cys533. Positions 620–785 (DVFTVIISYV…ITCFVSLLGL (166 aa)) constitute an SSD domain. Residues 622-642 (FTVIISYVVMFLYISLALGHI) form a helical membrane-spanning segment. At 643 to 653 (QSCSRLLVDSK) the chain is on the cytoplasmic side. The chain crosses the membrane as a helical span at residues 654–674 (ISLGIAGILIVLSSVACSLGI). The Lumenal segment spans residues 675–683 (FSYMGMPLT). A helical membrane pass occupies residues 684–704 (LIVIEVIPFLVLAVGVDNIFI). Topologically, residues 705–730 (LVQTYQRDERLQEETLDQQLGRILGE) are cytoplasmic. Residues 731-751 (VAPTMFLSSFSETSAFFFGAL) traverse the membrane as a helical segment. Topologically, residues 752 to 759 (SSMPAVHT) are lumenal. Residues 760–780 (FSLFAGMAVLIDFLLQITCFV) form a helical membrane-spanning segment. Residues 781-832 (SLLGLDIKRQEKNHLDILCCVRGADDGQGSHASESYLFRFFKNYFAPLLLKD) are Cytoplasmic-facing. Residues 833–853 (WLRPIVVAVFVGVLSFSVAVV) form a helical membrane-spanning segment. The Lumenal portion of the chain corresponds to 854–1097 (NKVDIGLDQS…EQYLTIIDDT (244 aa)). Residues Asn868 and Asn898 are each glycosylated (N-linked (GlcNAc...) asparagine). Cys909 and Cys914 are joined by a disulfide. Residues Asn916, Asn961, Asn968, and Asn1063 are each glycosylated (N-linked (GlcNAc...) asparagine). Intrachain disulfides connect Cys956-Cys1011, Cys957-Cys979, and Cys967-Cys976. A helical transmembrane segment spans residues 1098-1118 (IFNLSVSLGSIFLVTLVVLGC). Over 1119-1123 (ELWSA) the chain is Cytoplasmic. A helical transmembrane segment spans residues 1124 to 1144 (VIMCITIAMILVNMFGVMWLW). Position 1145 (Gly1145) is a topological domain, lumenal. A helical transmembrane segment spans residues 1146-1166 (ISLNAVSLVNLVMSCGISVEF). Topologically, residues 1167 to 1194 (CSHITRAFTMSTKGSRVSRAEEALAHMG) are cytoplasmic. The helical transmembrane segment at 1195–1215 (SSVFSGITLTKFGGIVVLAFA) threads the bilayer. Over 1216 to 1226 (KSQIFEIFYFR) the chain is Lumenal. A helical membrane pass occupies residues 1227–1247 (MYLAMVLLGATHGLIFLPVLL). The Cytoplasmic portion of the chain corresponds to 1248–1277 (SYIGPSVNKAKRHTTYERYRGTERERLLNF). A required for location in lysosomes region spans residues 1274–1277 (LLNF). The short motif at 1274 to 1277 (LLNF) is the Di-leucine motif element.

This sequence belongs to the patched family. As to quaternary structure, interacts (via the second lumenal domain) with NPC2. Interacts with TMEM97; the interaction may decrease NPC1 availability to the cell. Interacts with TIM1. Interacts with SLC38A9; this interaction inhibits cholesterol-mediated mTORC1 activation via its sterol transport activity. N-glycosylated. As to expression, detected in liver (at protein level). Ubiquitous. Detected in adult heart, spleen, lung, liver, skeletal muscle, kidney, testis.

Its subcellular location is the late endosome membrane. It localises to the lysosome membrane. It catalyses the reaction cholesterol(in) = cholesterol(out). Intracellular cholesterol transporter which acts in concert with NPC2 and plays an important role in the egress of cholesterol from the endosomal/lysosomal compartment. Unesterified cholesterol that has been released from LDLs in the lumen of the late endosomes/lysosomes is transferred by NPC2 to the cholesterol-binding pocket in the N-terminal domain of NPC1. Cholesterol binds to NPC1 with the hydroxyl group buried in the binding pocket. May play a role in vesicular trafficking in glia, a process that may be crucial for maintaining the structural and functional integrity of nerve terminals. Inhibits cholesterol-mediated mTORC1 activation throught its interaction with SLC38A9. The protein is NPC intracellular cholesterol transporter 1 of Mus musculus (Mouse).